A 223-amino-acid chain; its full sequence is MSTLHKVKAYFGMAPMEDYDDEYYDDRGPSRGYSRPRFEDDYGRYEGRDFEDPRRDPRAGMRADLRGEPADYPPPGGYRGGYPDEARFQPREFDRADMARPRFGSWLRNPTRGSLAMDPRRMAMMFEEGHPLSKITTLRPKDYSEARTIGERFRDGTPVIMDLVSMDNADAKRLVDFAAGLAFALRGSFDKVATKVFLLSPADVDVTPEERRRIAETGFYAYQ.

The interval 19–81 is disordered; that stretch reads YDDEYYDDRG…YPPPGGYRGG (63 aa). A compositionally biased stretch (basic and acidic residues) spans 36 to 69; sequence PRFEDDYGRYEGRDFEDPRRDPRAGMRADLRGEP.

The protein belongs to the SepF family. In terms of assembly, homodimer. Interacts with FtsZ.

The protein resides in the cytoplasm. Cell division protein that is part of the divisome complex and is recruited early to the Z-ring. Probably stimulates Z-ring formation, perhaps through the cross-linking of FtsZ protofilaments. Its function overlaps with FtsA. The protein is Cell division protein SepF of Mycobacterium ulcerans (strain Agy99).